Here is a 477-residue protein sequence, read N- to C-terminus: FAD-dependent monooxygenase paxM (477 aa).

A helical membrane pass occupies residues 4 to 24; the sequence is AEFQVIIVGGSIGGLTLAHCL. The FAD site is built by Glu35, Gly49, and Arg108. Arg195 is a catalytic residue. Residues Asp308 and Ala321 each contribute to the FAD site. The helical transmembrane segment at 446–466 threads the bilayer; the sequence is LMIYLFGLTIVYTSLTMMFDL.

The protein belongs to the paxM FAD-dependent monooxygenase family. The cofactor is FAD.

It is found in the membrane. Its pathway is secondary metabolite biosynthesis. FAD-dependent monooxygenase; part of the gene cluster that mediates the biosynthesis of paxilline, a mycotoxin that acts as an inhibitor of mammalian maxi-K channels. PaxG, the geranylgeranyl diphosphate (GGPP) synthase is proposed to catalyze the first step in paxilline biosynthesis. Condensation of indole-3-glycerol phosphate with GGPP by paxC then forms 3-geranylgeranylindole (3-GGI), followed by epoxidation and cyclization of this intermediate (by paxM and paxB) to form paspaline. Paspaline is subsequently converted to 13-desoxypaxilline by paxP, the latter being then converted to paxilline by paxQ. Finally paxilline can be mono- and di-prenylated by paxD. This is FAD-dependent monooxygenase paxM from Penicillium paxilli.